A 683-amino-acid polypeptide reads, in one-letter code: DNA ligase (683 aa).

Residues 43 to 47 (DAEYD), 92 to 93 (SL), and glutamate 125 each bind NAD(+). Lysine 127 serves as the catalytic N6-AMP-lysine intermediate. NAD(+) is bound by residues arginine 148, glutamate 185, lysine 303, and lysine 327. Zn(2+) contacts are provided by cysteine 421, cysteine 424, cysteine 439, and cysteine 445. In terms of domain architecture, BRCT spans 604-683 (IADNPLKGKN…QEFIALTGEN (80 aa)).

The protein belongs to the NAD-dependent DNA ligase family. LigA subfamily. It depends on Mg(2+) as a cofactor. Mn(2+) is required as a cofactor.

The catalysed reaction is NAD(+) + (deoxyribonucleotide)n-3'-hydroxyl + 5'-phospho-(deoxyribonucleotide)m = (deoxyribonucleotide)n+m + AMP + beta-nicotinamide D-nucleotide.. Its function is as follows. DNA ligase that catalyzes the formation of phosphodiester linkages between 5'-phosphoryl and 3'-hydroxyl groups in double-stranded DNA using NAD as a coenzyme and as the energy source for the reaction. It is essential for DNA replication and repair of damaged DNA. This Actinobacillus pleuropneumoniae serotype 5b (strain L20) protein is DNA ligase.